The primary structure comprises 172 residues: Glutamyl-tRNA(Gln) amidotransferase subunit C-4, mitochondrial (172 aa).

The transit peptide at 1–23 directs the protein to the mitochondrion; the sequence is MIRIPFHLRQTPGRTLHSLVRSF. The tract at residues 51–73 is disordered; the sequence is PSKVPQRPHKSTIDGQSTPTRIP.

The protein belongs to the GatC family. As to quaternary structure, subunit of the heterotrimeric GatCAB amidotransferase (AdT) complex, composed of A, B and C subunits.

It is found in the mitochondrion. It carries out the reaction L-glutamyl-tRNA(Gln) + L-glutamine + ATP + H2O = L-glutaminyl-tRNA(Gln) + L-glutamate + ADP + phosphate + H(+). Allows the formation of correctly charged Gln-tRNA(Gln) through the transamidation of misacylated Glu-tRNA(Gln) in the mitochondria. The reaction takes place in the presence of glutamine and ATP through an activated gamma-phospho-Glu-tRNA(Gln). The protein is Glutamyl-tRNA(Gln) amidotransferase subunit C-4, mitochondrial of Culex quinquefasciatus (Southern house mosquito).